The chain runs to 809 residues: Sucrose synthase 3 (809 aa).

Residues Met-277–Thr-755 form a GT-B glycosyltransferase region.

It belongs to the glycosyltransferase 1 family. Plant sucrose synthase subfamily. Detected in the whole plant with highest expression in developing siliques, vasculature of cotyledons and stomatal guard cells. Also detected throughout the mature parts of the root but not in the expanding zone.

The enzyme catalyses an NDP-alpha-D-glucose + D-fructose = a ribonucleoside 5'-diphosphate + sucrose + H(+). Functionally, sucrose-cleaving enzyme that provides UDP-glucose and fructose for various metabolic pathways. Modulates metabolic homeostasis and direct carbon towards starch synthesis in developing seeds. This is Sucrose synthase 3 (SUS3) from Arabidopsis thaliana (Mouse-ear cress).